Consider the following 331-residue polypeptide: Aflatoxin B1 aldehyde reductase member 4 (331 aa).

Asp44 provides a ligand contact to NADP(+). Tyr49 acts as the Proton donor in catalysis. Ser85 is modified (phosphoserine). His113 contacts substrate. Residues 143 to 144 (SN), Gln169, 198 to 208 (NPLAGGLLTGK), and Arg222 each bind NADP(+). Residue Tyr232 coordinates substrate. An NADP(+)-binding site is contributed by 290-298 (SSLEQLEQN).

This sequence belongs to the aldo/keto reductase family. Aldo/keto reductase 2 subfamily. Mainly expressed in uterus.

In terms of biological role, can reduce the dialdehyde protein-binding form of aflatoxin B1 (AFB1) to the non-binding AFB1 dialcohol. May be involved in protection of liver against the toxic and carcinogenic effects of AFB1, a potent hepatocarcinogen. This Homo sapiens (Human) protein is Aflatoxin B1 aldehyde reductase member 4 (AKR7L).